We begin with the raw amino-acid sequence, 241 residues long: GPI-anchored hemophore RBT5 (241 aa).

A signal peptide spans Met-1–Ala-20. Positions Asn-26 to Ala-137 constitute a CFEM domain. Cystine bridges form between Cys-54–Cys-94, Cys-58–Cys-89, Cys-68–Cys-75, and Cys-77–Cys-110. Asp-72 provides a ligand contact to heme. Composition is skewed to low complexity over residues Thr-140–Thr-154 and Lys-163–Thr-182. A disordered region spans residues Thr-140 to Ala-210. Over residues Ser-183 to Glu-199 the composition is skewed to basic and acidic residues. A compositionally biased stretch (low complexity) spans Ser-200–Ala-210. A lipid anchor (GPI-anchor amidated asparagine) is attached at Asn-221. Residues Ala-222–Phe-241 constitute a propeptide, removed in mature form.

The protein belongs to the RBT5 family. Interacts with PGA7. The GPI-anchor is attached to the protein in the endoplasmic reticulum and serves to target the protein to the cell surface. There, the glucosamine-inositol phospholipid moiety is cleaved off and the GPI-modified mannoprotein is covalently attached via its lipidless GPI glycan remnant to the 1,6-beta-glucan of the outer cell wall layer. In terms of processing, mannosylated.

The protein resides in the secreted. It is found in the cell wall. It localises to the cell membrane. In terms of biological role, GPI-linked hyphal surface heme-binding protein involved in heme-iron utilization. Heme transfer occurs between PGA7, RBT5 and CSA2 supporting a model in which the 3 CFEM proteins cooperate in a heme-acquisition system and form a cross-cell wall heme-transfer cascade. The ability to acquire iron from host tissues is a major virulence factor of pathogenic microorganisms. Required for biofilm formation. The sequence is that of GPI-anchored hemophore RBT5 from Candida albicans (strain SC5314 / ATCC MYA-2876) (Yeast).